A 163-amino-acid polypeptide reads, in one-letter code: Ribonuclease P protein component 4 (163 aa).

Zn(2+) contacts are provided by Cys-66, Cys-69, Cys-96, and Cys-99. The interval 110–163 (GPRGGAPISPPAAEYGSGGRDSGEREDKGPQGPPRQGGRDNRQGGGHQGGPKGD) is disordered. A compositionally biased stretch (gly residues) spans 152-163 (QGGGHQGGPKGD).

The protein belongs to the eukaryotic/archaeal RNase P protein component 4 family. In terms of assembly, consists of a catalytic RNA component and at least 4-5 protein subunits. It depends on Zn(2+) as a cofactor.

The protein localises to the cytoplasm. The catalysed reaction is Endonucleolytic cleavage of RNA, removing 5'-extranucleotides from tRNA precursor.. Functionally, part of ribonuclease P, a protein complex that generates mature tRNA molecules by cleaving their 5'-ends. The protein is Ribonuclease P protein component 4 of Aeropyrum pernix (strain ATCC 700893 / DSM 11879 / JCM 9820 / NBRC 100138 / K1).